The chain runs to 339 residues: Protein LicA (339 aa).

9 tandem repeats follow at residues 4-7 (INQS), 8-11 (INQS), 12-15 (INQS), 16-19 (INQS), 20-23 (INQS), 24-27 (INQS), 28-31 (INQS), 32-35 (INQS), and 36-39 (INQS). The 9 X 4 AA tandem repeats of I-N-Q-S stretch occupies residues 4–39 (INQSINQSINQSINQSINQSINQSINQSINQSINQS).

This sequence belongs to the peptidase S49 family.

Mediates phase variation of the LOS 6A2 and 12D9 epitopes. Phase variation of H.influenza LOS epitopes expressed by LicA is determined by a translational switch. The protein is Protein LicA (licA) of Haemophilus influenzae.